The sequence spans 506 residues: Exopolyphosphatase (506 aa).

Belongs to the GppA/Ppx family. In terms of assembly, homodimer. Requires Mg(2+) as cofactor.

It localises to the cell membrane. It carries out the reaction [phosphate](n) + H2O = [phosphate](n-1) + phosphate + H(+). It catalyses the reaction [phosphate](n) + ATP = [phosphate](n+1) + ADP. Exopolyphosphatase activity is stimulated by NH(4)(+) and K(+). Phosphotransferase activity is insensitive to the addition of K(+) or NH(4)(+) ions. Functionally, degradation of inorganic polyphosphates (polyP). Releases orthophosphate processively from the ends of the polyP chain. Also has polyphosphate:ADP phosphotransferase activity, catalyzing the production of ATP from ADP and polyP. The sequence is that of Exopolyphosphatase from Pseudomonas aeruginosa (strain ATCC 15692 / DSM 22644 / CIP 104116 / JCM 14847 / LMG 12228 / 1C / PRS 101 / PAO1).